Reading from the N-terminus, the 227-residue chain is Cytidylate kinase (227 aa).

12–20 (GPSGVGKGT) serves as a coordination point for ATP.

It belongs to the cytidylate kinase family. Type 1 subfamily.

The protein resides in the cytoplasm. The catalysed reaction is CMP + ATP = CDP + ADP. The enzyme catalyses dCMP + ATP = dCDP + ADP. The polypeptide is Cytidylate kinase (Shewanella denitrificans (strain OS217 / ATCC BAA-1090 / DSM 15013)).